A 213-amino-acid polypeptide reads, in one-letter code: Uridine kinase (213 aa).

Residue 15 to 22 (GASASGKS) coordinates ATP.

This sequence belongs to the uridine kinase family.

The protein localises to the cytoplasm. It catalyses the reaction uridine + ATP = UMP + ADP + H(+). The catalysed reaction is cytidine + ATP = CMP + ADP + H(+). It functions in the pathway pyrimidine metabolism; CTP biosynthesis via salvage pathway; CTP from cytidine: step 1/3. The protein operates within pyrimidine metabolism; UMP biosynthesis via salvage pathway; UMP from uridine: step 1/1. The sequence is that of Uridine kinase from Pectobacterium atrosepticum (strain SCRI 1043 / ATCC BAA-672) (Erwinia carotovora subsp. atroseptica).